The sequence spans 782 residues: DNA repair and recombination protein RAD54-like (782 aa).

Residues 1-20 (MRRSLAPSQRGGQRLSSRND) are compositionally biased toward polar residues. The tract at residues 1 to 28 (MRRSLAPSQRGGQRLSSRNDFTPPLLKK) is disordered. The tract at residues 2–9 (RRSLAPSQ) is required for chromatin remodeling, strand pairing activities and coupling of ATPase activity. Thr-22 is subject to Phosphothreonine. Positions 168–343 (EGKRGNFNGC…FSLVNFVNPE (176 aa)) constitute a Helicase ATP-binding domain. 181-188 (DEMGLGKT) contributes to the ATP binding site. The DEGH box motif lies at 294–297 (DEGH). Positions 501 to 658 (LLDFMLAAIR…NNESAEKHFT (158 aa)) constitute a Helicase C-terminal domain. Positions 741–753 (SQKIEATPATETS) are enriched in polar residues. The interval 741–782 (SQKIEATPATETSVEAKLEPERRKRPAMPLSDDSADEDFQGF) is disordered. Acidic residues predominate over residues 773 to 782 (DSADEDFQGF).

The protein belongs to the SNF2/RAD54 helicase family. Interacts (via N-terminus) with spn-A/Rad51.

It localises to the nucleus. Involved in mitotic DNA repair and meiotic recombination. Functions in the recombinational DNA repair pathway. Essential for interhomolog gene conversion (GC), but may have a less important role in intersister GC than spn-A/Rad51. In the presence of DNA, spn-A/Rad51 enhances the ATPase activity of okr/Rad54. In Drosophila persimilis (Fruit fly), this protein is DNA repair and recombination protein RAD54-like.